A 635-amino-acid polypeptide reads, in one-letter code: Threonine--tRNA ligase (635 aa).

The 61-residue stretch at 1-61 (MIQITLPDSS…SQDSALSIVT (61 aa)) folds into the TGS domain. The segment at 242–533 (DHRKLGKELD…LIEEHAGALP (292 aa)) is catalytic. Zn(2+) is bound by residues Cys333, His384, and His510.

Belongs to the class-II aminoacyl-tRNA synthetase family. In terms of assembly, homodimer. The cofactor is Zn(2+).

Its subcellular location is the cytoplasm. The enzyme catalyses tRNA(Thr) + L-threonine + ATP = L-threonyl-tRNA(Thr) + AMP + diphosphate + H(+). Catalyzes the attachment of threonine to tRNA(Thr) in a two-step reaction: L-threonine is first activated by ATP to form Thr-AMP and then transferred to the acceptor end of tRNA(Thr). Also edits incorrectly charged L-seryl-tRNA(Thr). In Polaromonas naphthalenivorans (strain CJ2), this protein is Threonine--tRNA ligase.